Reading from the N-terminus, the 505-residue chain is Glutamate--tRNA ligase (505 aa).

Positions 12 to 22 match the 'HIGH' region motif; that stretch reads PSPTGDPHVGT. A 'KMSKS' region motif is present at residues 253-257; sequence KLSKR. An ATP-binding site is contributed by lysine 256.

Belongs to the class-I aminoacyl-tRNA synthetase family. Glutamate--tRNA ligase type 1 subfamily. As to quaternary structure, monomer.

The protein localises to the cytoplasm. It carries out the reaction tRNA(Glu) + L-glutamate + ATP = L-glutamyl-tRNA(Glu) + AMP + diphosphate. Catalyzes the attachment of glutamate to tRNA(Glu) in a two-step reaction: glutamate is first activated by ATP to form Glu-AMP and then transferred to the acceptor end of tRNA(Glu). The polypeptide is Glutamate--tRNA ligase (Chlamydophila psittaci (strain ATCC VR-125 / 6BC) (Chlamydia psittaci)).